We begin with the raw amino-acid sequence, 361 residues long: Transcription factor TCP10 (361 aa).

One can recognise a TCP domain in the interval 29-87; sequence RKDRHSKVFTSKGPRDRRVRLSAHTAIQFYDVQDRLGYDRPSKAVDWLIKKAKTAIDKL. Disordered regions lie at residues 220-259 and 295-317; these read DLTM…QPSM and SWDH…SMFA. Residues 295-304 show a composition bias toward basic and acidic residues; that stretch reads SWDHHQTTSD.

As to quaternary structure, interacts with AHP1, AHP2 and AHP3. Interacts with SPL. Mostly detected in lateral organs, such as leaves and flowers. Expressed in cotyledons, particularly in the vascular region, in leaves, roots, stems, buds, flowers and immature siliques.

The protein localises to the nucleus. Functionally, plays a pivotal role in the control of morphogenesis of shoot organs by negatively regulating the expression of boundary-specific genes such as CUC genes, probably through the induction of miRNA (e.g. miR164). Participates in ovule development. The chain is Transcription factor TCP10 (TCP10) from Arabidopsis thaliana (Mouse-ear cress).